The chain runs to 299 residues: Class II hydrophobin C (299 aa).

An N-terminal signal peptide occupies residues 1–17; it reads MKFLTVAAAIFASTSLA. N-linked (GlcNAc...) asparagine glycans are attached at residues Asn-39, Asn-78, and Asn-91. 4 cysteine pairs are disulfide-bonded: Cys-232–Cys-281, Cys-242–Cys-272, Cys-243–Cys-255, and Cys-282–Cys-293.

Belongs to the cerato-ulmin hydrophobin family.

It localises to the secreted. It is found in the cell wall. The protein resides in the vacuole. Its subcellular location is the cytoplasmic vesicle. Its function is as follows. Aerial growth, conidiation, and dispersal of filamentous fungi in the environment rely upon a capability of their secreting small amphipathic proteins called hydrophobins (HPBs) with low sequence identity. Class I can self-assemble into an outermost layer of rodlet bundles on aerial cell surfaces, conferring cellular hydrophobicity that supports fungal growth, development and dispersal; whereas Class II form highly ordered films at water-air interfaces through intermolecular interactions but contribute nothing to the rodlet structure. Hyd2C contributes to certain cell wall-related features, such as hydrophobicity but is not involved in cell wall-related events during fungal proliferation in host hemocoel. Does not contribute to conidial hydrophobicity. Involved actively in the asexual development. The polypeptide is Class II hydrophobin C (Beauveria bassiana (strain ARSEF 2860) (White muscardine disease fungus)).